We begin with the raw amino-acid sequence, 633 residues long: Probable potassium transport system protein Kup 3 (633 aa).

12 helical membrane passes run 24 to 44, 61 to 81, 114 to 134, 148 to 168, 180 to 200, 222 to 242, 258 to 278, 298 to 318, 348 to 368, 377 to 397, 405 to 425, and 427 to 447; these read LVLA…LYAF, VLGI…LKYV, LVLG…TPAI, PALS…LFFV, FGPV…IHIF, IGSA…AEAL, WFSL…AFVL, IPMV…VISG, IFMP…VLFF, AYGI…FIVM, LTAA…FLAA, and IAKF…MALI.

This sequence belongs to the HAK/KUP transporter (TC 2.A.72) family.

The protein localises to the cell inner membrane. It carries out the reaction K(+)(in) + H(+)(in) = K(+)(out) + H(+)(out). In terms of biological role, transport of potassium into the cell. Likely operates as a K(+):H(+) symporter. This is Probable potassium transport system protein Kup 3 from Rhizobium johnstonii (strain DSM 114642 / LMG 32736 / 3841) (Rhizobium leguminosarum bv. viciae).